Consider the following 447-residue polypeptide: Rab GDP dissociation inhibitor alpha (447 aa).

S427 carries the phosphoserine modification.

The protein belongs to the Rab GDI family. Interacts with RHOH. Interacts with the non-phosphorylated forms of RAB1A, RAB3A, RAB5A, RAB5B, RAB5C, RAB8A, RAB8B, RAB10, RAB12, RAB35, and RAB43. High expression in brain, lower in other tissues.

It localises to the cytoplasm. The protein resides in the golgi apparatus. It is found in the trans-Golgi network. Regulates the GDP/GTP exchange reaction of most Rab proteins by inhibiting the dissociation of GDP from them, and the subsequent binding of GTP to them. Promotes the dissociation of GDP-bound Rab proteins from the membrane and inhibits their activation. Promotes the dissociation of RAB1A, RAB3A, RAB5A and RAB10 from membranes. This is Rab GDP dissociation inhibitor alpha (Gdi1) from Rattus norvegicus (Rat).